Consider the following 557-residue polypeptide: Urocanate hydratase (557 aa).

The disordered stretch occupies residues 1-20 (MSNPRHNEREVRSPRGDELN). Residues 52–53 (GG), Q130, 176–178 (GMG), E196, R201, 242–243 (NA), 263–267 (QTSAH), 273–274 (YL), and Y322 each bind NAD(+). C410 is an active-site residue. G492 is a binding site for NAD(+).

This sequence belongs to the urocanase family. It depends on NAD(+) as a cofactor.

The protein localises to the cytoplasm. The enzyme catalyses 4-imidazolone-5-propanoate = trans-urocanate + H2O. Its pathway is amino-acid degradation; L-histidine degradation into L-glutamate; N-formimidoyl-L-glutamate from L-histidine: step 2/3. Catalyzes the conversion of urocanate to 4-imidazolone-5-propionate. This Brucella suis (strain ATCC 23445 / NCTC 10510) protein is Urocanate hydratase.